Consider the following 298-residue polypeptide: MFTAKCAMQNIRNVAIVGSGQMGSGIAQVTASSGFNVMLADVNKKALDRAMKAISQSVTHLSKKQKGTDKEKSDFVTLTMSRIKTCNNVSTAVADADLIIEAAIENIDLKRGIFAQIEQSCKKDSILTTNTSSFLLEDVAKGLQDKTRFGGLHFFNPVPVMKLLEVIRSDDTSDETYATLIKFGTAVGKTTVACKDSPGFIVNRLLIPYFFEAARMYERGDASMTDIDEAMKLGAGHPMGPFELADYIGLDTVKFVMDGWAAKYPEVQLFEASPLVDKLVAEGKLGRKTGDGFYSYKK.

It belongs to the 3-hydroxyacyl-CoA dehydrogenase family. Homodimer.

Its subcellular location is the mitochondrion matrix. The catalysed reaction is a (3S)-3-hydroxyacyl-CoA + NAD(+) = a 3-oxoacyl-CoA + NADH + H(+). Its pathway is lipid metabolism; fatty acid beta-oxidation. This Caenorhabditis elegans protein is Probable 3-hydroxyacyl-CoA dehydrogenase F54C8.1.